Consider the following 361-residue polypeptide: Chorismate synthase (361 aa).

An NADP(+)-binding site is contributed by arginine 47. FMN contacts are provided by residues 124–126, glycine 286, 301–305, and arginine 327; these read RAS and KPTAT.

The protein belongs to the chorismate synthase family. In terms of assembly, homotetramer. It depends on FMNH2 as a cofactor.

It carries out the reaction 5-O-(1-carboxyvinyl)-3-phosphoshikimate = chorismate + phosphate. Its pathway is metabolic intermediate biosynthesis; chorismate biosynthesis; chorismate from D-erythrose 4-phosphate and phosphoenolpyruvate: step 7/7. Catalyzes the anti-1,4-elimination of the C-3 phosphate and the C-6 proR hydrogen from 5-enolpyruvylshikimate-3-phosphate (EPSP) to yield chorismate, which is the branch point compound that serves as the starting substrate for the three terminal pathways of aromatic amino acid biosynthesis. This reaction introduces a second double bond into the aromatic ring system. The protein is Chorismate synthase of Prochlorococcus marinus (strain NATL1A).